The following is an 81-amino-acid chain: Short neurotoxin D (81 aa).

An N-terminal signal peptide occupies residues 1–21 (MKTLLLTLVVVTIVCLDLGYT). 4 disulfides stabilise this stretch: Cys24–Cys43, Cys38–Cys60, Cys62–Cys73, and Cys74–Cys79.

Belongs to the three-finger toxin family. Short-chain subfamily. Type I alpha-neurotoxin sub-subfamily. As to expression, expressed by the venom gland.

It localises to the secreted. Binds to muscle nicotinic acetylcholine receptor (nAChR) and inhibit acetylcholine from binding to the receptor, thereby impairing neuromuscular transmission. The polypeptide is Short neurotoxin D (Aipysurus laevis (Olive sea snake)).